Consider the following 463-residue polypeptide: uncharacterized protein (463 aa).

The protein belongs to the mycobacterial PPE family.

This is an uncharacterized protein from Mycobacterium tuberculosis (strain CDC 1551 / Oshkosh).